We begin with the raw amino-acid sequence, 66 residues long: Large ribosomal subunit protein bL31 (66 aa).

Zn(2+) is bound by residues Cys16, Cys18, Cys36, and Cys39.

The protein belongs to the bacterial ribosomal protein bL31 family. Type A subfamily. In terms of assembly, part of the 50S ribosomal subunit during exponential growth. Zn(2+) serves as cofactor.

Binds the 23S rRNA. In terms of biological role, while neither of the L31 paralogs is essential, this protein seems to function as the main L31 protein. Has a lower affinity for 70S ribosomes than the non-zinc-containing paralog L31B (ytiA); is displaced by it to varying extents, even under zinc-replete conditions. The chain is Large ribosomal subunit protein bL31 (rpmE) from Bacillus subtilis (strain 168).